A 282-amino-acid chain; its full sequence is Aldo-keto reductase ML1669 (282 aa).

Y57 functions as the Proton donor in the catalytic mechanism. L197, V235, R237, S238, A239, S246, N247, and R273 together coordinate NADPH.

It belongs to the aldo/keto reductase family.

In Mycobacterium leprae (strain TN), this protein is Aldo-keto reductase ML1669.